The sequence spans 190 residues: Adenylate kinase (190 aa).

11–16 contributes to the ATP binding site; sequence GAGKGT. An NMP region spans residues 31-60; it reads STGDIFRFNIKNETELGKLAKTFMDKGDLV. AMP is bound by residues Thr32, Arg37, 58–60, 86–89, and Gln93; these read DLV and GFPR. An LID region spans residues 127–137; it reads ERGKTSGRVDD. Arg128 contacts ATP. 2 residues coordinate AMP: Arg134 and Arg146. Gly174 contacts ATP.

The protein belongs to the adenylate kinase family. In terms of assembly, monomer.

The protein resides in the cytoplasm. The catalysed reaction is AMP + ATP = 2 ADP. Its pathway is purine metabolism; AMP biosynthesis via salvage pathway; AMP from ADP: step 1/1. Catalyzes the reversible transfer of the terminal phosphate group between ATP and AMP. Plays an important role in cellular energy homeostasis and in adenine nucleotide metabolism. This is Adenylate kinase from Flavobacterium psychrophilum (strain ATCC 49511 / DSM 21280 / CIP 103535 / JIP02/86).